The sequence spans 224 residues: Giant hemoglobin linker AV-1 chain (224 aa).

Positions 62–103 (HWCPSKYHRCGNSPQCMSNMAFCDGVNDCKNHFDEDENRCVV) constitute an LDL-receptor class A domain. 3 disulfide bridges follow: Cys-64/Cys-77, Cys-71/Cys-90, and Cys-84/Cys-101. Asn-108 carries an N-linked (GlcNAc...) asparagine glycan.

In terms of assembly, giant hemoglobin is composed of four heme-containing chains (AI to AIV), and two linker chains (AV and AVI).

Functionally, acts as a linker for the assembly of heme-containing chains in the construction of giant hemoglobin. In Lamellibrachia sp. (Deep-sea giant tube worm), this protein is Giant hemoglobin linker AV-1 chain.